A 112-amino-acid chain; its full sequence is U-scoloptoxin(16)-Er5a (112 aa).

The N-terminal stretch at 1 to 26 is a signal peptide; it reads MNTVSVVQFLAVGCAVFVLYGRGVFA.

This sequence belongs to the scoloptoxin-16 family. Post-translationally, contains 2 disulfide bonds. In terms of tissue distribution, expressed by the venom gland.

It is found in the secreted. The protein is U-scoloptoxin(16)-Er5a of Ethmostigmus rubripes (Giant centipede).